The primary structure comprises 300 residues: UDP-N-acetylenolpyruvoylglucosamine reductase (300 aa).

The 165-residue stretch at 30 to 194 (KVGGAADFFV…VGATFRLDPA (165 aa)) folds into the FAD-binding PCMH-type domain. Arg174 is an active-site residue. Ser223 serves as the catalytic Proton donor. Residue Glu293 is part of the active site.

Belongs to the MurB family. The cofactor is FAD.

The protein resides in the cytoplasm. The catalysed reaction is UDP-N-acetyl-alpha-D-muramate + NADP(+) = UDP-N-acetyl-3-O-(1-carboxyvinyl)-alpha-D-glucosamine + NADPH + H(+). Its pathway is cell wall biogenesis; peptidoglycan biosynthesis. Functionally, cell wall formation. In Geobacter metallireducens (strain ATCC 53774 / DSM 7210 / GS-15), this protein is UDP-N-acetylenolpyruvoylglucosamine reductase.